The primary structure comprises 191 residues: uncharacterized protein (191 aa).

The region spanning 6–66 (GLTQKMIVDA…ELAVRGLTKL (61 aa)) is the HTH tetR-type domain. Residues 29 to 48 (SLAALSKKMNVRPPSLYNHI) constitute a DNA-binding region (H-T-H motif).

This is an uncharacterized protein from Bacillus subtilis (strain 168).